Reading from the N-terminus, the 135-residue chain is Large-conductance mechanosensitive channel (135 aa).

A run of 2 helical transmembrane segments spans residues F10–G30 and G76–I96.

The protein belongs to the MscL family. In terms of assembly, homopentamer.

Its subcellular location is the cell inner membrane. Functionally, channel that opens in response to stretch forces in the membrane lipid bilayer. May participate in the regulation of osmotic pressure changes within the cell. In Proteus mirabilis (strain HI4320), this protein is Large-conductance mechanosensitive channel.